Reading from the N-terminus, the 344-residue chain is Holliday junction branch migration complex subunit RuvB (344 aa).

A large ATPase domain (RuvB-L) region spans residues 1–183; sequence MPDRELISGD…FGLVLRLDPY (183 aa). Residues leucine 22, arginine 23, glycine 64, lysine 67, threonine 68, threonine 69, 130–132, arginine 173, tyrosine 183, and arginine 220 each bind ATP; that span reads EDF. Threonine 68 lines the Mg(2+) pocket. Positions 184-254 are small ATPAse domain (RuvB-S); the sequence is NTEELKAIVK…VAQTALNLLD (71 aa). The head domain (RuvB-H) stretch occupies residues 257–344; that stretch reads RYGLDEIDQK…EGDHPSLFEA (88 aa). DNA is bound by residues arginine 312 and arginine 317.

Belongs to the RuvB family. In terms of assembly, homohexamer. Forms an RuvA(8)-RuvB(12)-Holliday junction (HJ) complex. HJ DNA is sandwiched between 2 RuvA tetramers; dsDNA enters through RuvA and exits via RuvB. An RuvB hexamer assembles on each DNA strand where it exits the tetramer. Each RuvB hexamer is contacted by two RuvA subunits (via domain III) on 2 adjacent RuvB subunits; this complex drives branch migration. In the full resolvosome a probable DNA-RuvA(4)-RuvB(12)-RuvC(2) complex forms which resolves the HJ.

It localises to the cytoplasm. The catalysed reaction is ATP + H2O = ADP + phosphate + H(+). Functionally, the RuvA-RuvB-RuvC complex processes Holliday junction (HJ) DNA during genetic recombination and DNA repair, while the RuvA-RuvB complex plays an important role in the rescue of blocked DNA replication forks via replication fork reversal (RFR). RuvA specifically binds to HJ cruciform DNA, conferring on it an open structure. The RuvB hexamer acts as an ATP-dependent pump, pulling dsDNA into and through the RuvAB complex. RuvB forms 2 homohexamers on either side of HJ DNA bound by 1 or 2 RuvA tetramers; 4 subunits per hexamer contact DNA at a time. Coordinated motions by a converter formed by DNA-disengaged RuvB subunits stimulates ATP hydrolysis and nucleotide exchange. Immobilization of the converter enables RuvB to convert the ATP-contained energy into a lever motion, pulling 2 nucleotides of DNA out of the RuvA tetramer per ATP hydrolyzed, thus driving DNA branch migration. The RuvB motors rotate together with the DNA substrate, which together with the progressing nucleotide cycle form the mechanistic basis for DNA recombination by continuous HJ branch migration. Branch migration allows RuvC to scan DNA until it finds its consensus sequence, where it cleaves and resolves cruciform DNA. The protein is Holliday junction branch migration complex subunit RuvB of Solibacter usitatus (strain Ellin6076).